A 130-amino-acid chain; its full sequence is Small ribosomal subunit protein uS8 (130 aa).

This sequence belongs to the universal ribosomal protein uS8 family. As to quaternary structure, part of the 30S ribosomal subunit. Contacts proteins S5 and S12.

Its function is as follows. One of the primary rRNA binding proteins, it binds directly to 16S rRNA central domain where it helps coordinate assembly of the platform of the 30S subunit. In Pseudomonas entomophila (strain L48), this protein is Small ribosomal subunit protein uS8.